A 156-amino-acid chain; its full sequence is Large ribosomal subunit protein uL15 (156 aa).

The tract at residues 1–56 (MDLSNLKPAEGATQAGQRLGRGEGSGRGGHSSTRGTKGQSSRSGSGTRPIWFEGGQ) is disordered.

Belongs to the universal ribosomal protein uL15 family. Part of the 50S ribosomal subunit.

Binds to the 23S rRNA. The polypeptide is Large ribosomal subunit protein uL15 (Salinibacter ruber (strain DSM 13855 / M31)).